A 382-amino-acid chain; its full sequence is 3-phytase (382 aa).

A signal peptide spans 1-26 (MKVPKTMLLSTAAGLLLSLTATSVSA). One can recognise a BPP domain in the interval 27–361 (HYVNEEHHFK…VSWEQIAQHL (335 aa)).

It localises to the secreted. The catalysed reaction is 1D-myo-inositol hexakisphosphate + H2O = 1D-myo-inositol 1,2,4,5,6-pentakisphosphate + phosphate. The sequence is that of 3-phytase (phy) from Bacillus subtilis (strain 168).